We begin with the raw amino-acid sequence, 660 residues long: Cullin-associated NEDD8-dissociated protein 1 homolog (660 aa).

A Glycyl lysine isopeptide (Lys-Gly) (interchain with G-Cter in NEDD8) cross-link involves residue lysine 16. The interval 339-364 (TQNENDHGSDNLIDSDDGFGSDNDPE) is disordered. Over residues 351 to 363 (IDSDDGFGSDNDP) the composition is skewed to acidic residues.

As to quaternary structure, interacts with unneddylated cullin CDC53. Neddylated at Lys-16.

Functionally, assembly factor of SCF (SKP1-CUL1-F-box protein) E3 ubiquitin ligase complexes that promotes the exchange of the substrate-recognition F-box subunit in SCF complexes, thereby playing a key role in the cellular repertoire of SCF complexes. Acts as a F-box protein exchange factor. Involved in the aging process. Longevity-assurance protein. The polypeptide is Cullin-associated NEDD8-dissociated protein 1 homolog (LAG2) (Saccharomyces cerevisiae (strain ATCC 204508 / S288c) (Baker's yeast)).